The primary structure comprises 311 residues: Solute carrier family 25 member 48 (311 aa).

Solcar repeat units lie at residues Ser3 to Phe86, Arg101 to Trp205, and Pro214 to Ala301. 6 consecutive transmembrane segments (helical) span residues Phe9–Val29, Gly61–Ser81, Leu107–Ile127, Val189–Glu209, Cys217–Met237, and Ile277–Tyr295.

The protein belongs to the mitochondrial carrier (TC 2.A.29) family.

It localises to the mitochondrion inner membrane. This is Solute carrier family 25 member 48 (SLC25A48) from Homo sapiens (Human).